The following is a 103-amino-acid chain: Large ribosomal subunit protein uL24 (103 aa).

It belongs to the universal ribosomal protein uL24 family. Part of the 50S ribosomal subunit.

In terms of biological role, one of two assembly initiator proteins, it binds directly to the 5'-end of the 23S rRNA, where it nucleates assembly of the 50S subunit. One of the proteins that surrounds the polypeptide exit tunnel on the outside of the subunit. The sequence is that of Large ribosomal subunit protein uL24 from Roseobacter denitrificans (strain ATCC 33942 / OCh 114) (Erythrobacter sp. (strain OCh 114)).